Consider the following 375-residue polypeptide: Acetylornithine aminotransferase (375 aa).

Residues 93–94 (GT) and Phe-120 each bind pyridoxal 5'-phosphate. Arg-123 is a binding site for N(2)-acetyl-L-ornithine. 205–208 (DEVQ) provides a ligand contact to pyridoxal 5'-phosphate. An N6-(pyridoxal phosphate)lysine modification is found at Lys-234. A N(2)-acetyl-L-ornithine-binding site is contributed by Thr-262. Thr-263 contacts pyridoxal 5'-phosphate.

This sequence belongs to the class-III pyridoxal-phosphate-dependent aminotransferase family. ArgD subfamily. As to quaternary structure, homodimer. It depends on pyridoxal 5'-phosphate as a cofactor.

It localises to the cytoplasm. It catalyses the reaction N(2)-acetyl-L-ornithine + 2-oxoglutarate = N-acetyl-L-glutamate 5-semialdehyde + L-glutamate. It functions in the pathway amino-acid biosynthesis; L-arginine biosynthesis; N(2)-acetyl-L-ornithine from L-glutamate: step 4/4. In Staphylococcus epidermidis (strain ATCC 12228 / FDA PCI 1200), this protein is Acetylornithine aminotransferase.